Here is a 209-residue protein sequence, read N- to C-terminus: Small ribosomal subunit protein uS4 (209 aa).

Over residues 1–13 (MSTKSRTRSKTRL) the composition is skewed to basic residues. Disordered regions lie at residues 1–20 (MSTKSRTRSKTRLSRALGIP) and 28–49 (YLEKRPYAPGEHGRSKRKQDSD). The 66-residue stretch at 95-160 (QRLDALVVRS…TEPFQVAAAG (66 aa)) folds into the S4 RNA-binding domain.

It belongs to the universal ribosomal protein uS4 family. In terms of assembly, part of the 30S ribosomal subunit. Contacts protein S5. The interaction surface between S4 and S5 is involved in control of translational fidelity.

Functionally, one of the primary rRNA binding proteins, it binds directly to 16S rRNA where it nucleates assembly of the body of the 30S subunit. Its function is as follows. With S5 and S12 plays an important role in translational accuracy. The chain is Small ribosomal subunit protein uS4 from Clavibacter sepedonicus (Clavibacter michiganensis subsp. sepedonicus).